The primary structure comprises 86 residues: Dynein light chain 1, cytoplasmic (86 aa).

Belongs to the dynein light chain family. In terms of assembly, homodimer. Cytoplasmic dynein consists of two catalytic heavy chains (HCs) and a number of non-catalytic subunits which present intermediate chains (ICs), light intermediate chains (LICs) and light chains (LCs). Component of the nuclear pore complex (NPC). NPC constitutes the exclusive means of nucleocytoplasmic transport. NPCs allow the passive diffusion of ions and small molecules and the active, nuclear transport receptor-mediated bidirectional transport of macromolecules such as proteins, RNAs, ribonucleoparticles (RNPs), and ribosomal subunits across the nuclear envelope. Due to its 8-fold rotational symmetry, all subunits are present with 8 copies or multiples thereof.

It is found in the cytoplasm. Its subcellular location is the cytoskeleton. The protein localises to the nucleus. It localises to the nuclear pore complex. In terms of biological role, acts as one of several non-catalytic accessory components of the cytoplasmic dynein complex that are thought to be involved in linking dynein to cargos and to adapter proteins that regulate dynein function. Cytoplasmic dynein 1 acts as a motor for the intracellular retrograde motility of vesicles and organelles along microtubules. May play a role in changing or maintaining the spatial distribution of cytoskeletal structures. Also a component of the nuclear pore complex. The chain is Dynein light chain 1, cytoplasmic (DYN2) from Candida glabrata (strain ATCC 2001 / BCRC 20586 / JCM 3761 / NBRC 0622 / NRRL Y-65 / CBS 138) (Yeast).